Here is a 258-residue protein sequence, read N- to C-terminus: Indole-3-glycerol phosphate synthase (258 aa).

This sequence belongs to the TrpC family.

The enzyme catalyses 1-(2-carboxyphenylamino)-1-deoxy-D-ribulose 5-phosphate + H(+) = (1S,2R)-1-C-(indol-3-yl)glycerol 3-phosphate + CO2 + H2O. The protein operates within amino-acid biosynthesis; L-tryptophan biosynthesis; L-tryptophan from chorismate: step 4/5. This Chlorobium limicola (strain DSM 245 / NBRC 103803 / 6330) protein is Indole-3-glycerol phosphate synthase.